The sequence spans 61 residues: Beta-insect depressant toxin BotIT5 (61 aa).

The region spanning 1–61 is the LCN-type CS-alpha/beta domain; it reads DGYIRKRDGC…TWKSETNTCG (61 aa). Intrachain disulfides connect cysteine 10-cysteine 60, cysteine 14-cysteine 35, cysteine 21-cysteine 42, and cysteine 25-cysteine 44. Glycine 61 carries the post-translational modification Glycine amide.

Belongs to the long (4 C-C) scorpion toxin superfamily. Sodium channel inhibitor family. Beta subfamily. In terms of tissue distribution, expressed by the venom gland.

The protein resides in the secreted. Its function is as follows. Depressant insect beta-toxins cause a transient contraction paralysis followed by a slow flaccid paralysis. They bind voltage-independently at site-4 of sodium channels (Nav) and shift the voltage of activation toward more negative potentials thereby affecting sodium channel activation and promoting spontaneous and repetitive firing. This toxin is active only on insects. The protein is Beta-insect depressant toxin BotIT5 of Buthus occitanus tunetanus (Common European scorpion).